Reading from the N-terminus, the 433-residue chain is Forkhead box protein A2-B (433 aa).

Positions 147–241 form a DNA-binding region, fork-head; sequence KPPYSYISLI…ENGCYLRRQK (95 aa). Residues 247–260 are compositionally biased toward basic and acidic residues; it reads KKPSLREGGGKKLS. 2 disordered regions span residues 247 to 337 and 407 to 433; these read KKPS…QSHL and SGLE…MNSS. The segment covering 261–282 has biased composition (low complexity); sequence EGASSVGSVGNSSSERSVGNES. Residues 292-302 are compositionally biased toward basic and acidic residues; sequence EQKRSLVDMKS. A compositionally biased stretch (low complexity) spans 315–331; that stretch reads ASQAQHLLSQHHSVLSH. Positions 407–421 are enriched in polar residues; it reads SGLEPSPISSDTSYY.

The protein resides in the nucleus. Functionally, acts as a transcriptional activator during early development, limiting the extent of mesoderm formation in the gastrula. Binds to DNA via the target sequence 5'-GT[AC]AACA-3', with 5'-GTAAACA-3' being the preferred binding site. In Xenopus laevis (African clawed frog), this protein is Forkhead box protein A2-B (foxa2-b).